Here is a 414-residue protein sequence, read N- to C-terminus: Serine hydroxymethyltransferase (414 aa).

(6S)-5,6,7,8-tetrahydrofolate is bound by residues leucine 116 and glycine 120–leucine 122. The residue at position 224 (lysine 224) is an N6-(pyridoxal phosphate)lysine. (6S)-5,6,7,8-tetrahydrofolate-binding positions include glutamate 240 and serine 348–phenylalanine 350.

Belongs to the SHMT family. As to quaternary structure, homodimer. It depends on pyridoxal 5'-phosphate as a cofactor.

The protein resides in the cytoplasm. The enzyme catalyses (6R)-5,10-methylene-5,6,7,8-tetrahydrofolate + glycine + H2O = (6S)-5,6,7,8-tetrahydrofolate + L-serine. It participates in one-carbon metabolism; tetrahydrofolate interconversion. It functions in the pathway amino-acid biosynthesis; glycine biosynthesis; glycine from L-serine: step 1/1. In terms of biological role, catalyzes the reversible interconversion of serine and glycine with tetrahydrofolate (THF) serving as the one-carbon carrier. This reaction serves as the major source of one-carbon groups required for the biosynthesis of purines, thymidylate, methionine, and other important biomolecules. Also exhibits THF-independent aldolase activity toward beta-hydroxyamino acids, producing glycine and aldehydes, via a retro-aldol mechanism. The protein is Serine hydroxymethyltransferase of Campylobacter jejuni (strain RM1221).